The following is a 276-amino-acid chain: Type II pantothenate kinase (276 aa).

Asp8–Lys15 is an ATP binding site. Glu76 functions as the Proton acceptor in the catalytic mechanism. ATP contacts are provided by residues Thr105, Gly127–Met131, Phe143, and Ser230.

Belongs to the type II pantothenate kinase family. As to quaternary structure, homodimer.

Its subcellular location is the cytoplasm. It carries out the reaction (R)-pantothenate + ATP = (R)-4'-phosphopantothenate + ADP + H(+). The protein operates within cofactor biosynthesis; coenzyme A biosynthesis; CoA from (R)-pantothenate: step 1/5. Catalyzes the phosphorylation of pantothenate (Pan), the first step in CoA biosynthesis. This Bacillus thuringiensis subsp. konkukian (strain 97-27) protein is Type II pantothenate kinase.